Here is a 394-residue protein sequence, read N- to C-terminus: Exodeoxyribonuclease 7 large subunit (394 aa).

It belongs to the XseA family. As to quaternary structure, heterooligomer composed of large and small subunits.

It is found in the cytoplasm. The enzyme catalyses Exonucleolytic cleavage in either 5'- to 3'- or 3'- to 5'-direction to yield nucleoside 5'-phosphates.. In terms of biological role, bidirectionally degrades single-stranded DNA into large acid-insoluble oligonucleotides, which are then degraded further into small acid-soluble oligonucleotides. This is Exodeoxyribonuclease 7 large subunit from Thermotoga maritima (strain ATCC 43589 / DSM 3109 / JCM 10099 / NBRC 100826 / MSB8).